The sequence spans 459 residues: tRNA modification GTPase MnmE (459 aa).

(6S)-5-formyl-5,6,7,8-tetrahydrofolate contacts are provided by Arg-22, Glu-87, and Arg-126. In terms of domain architecture, TrmE-type G spans 221–381 (GINVAICGKP…LEESIEKAVL (161 aa)). K(+) is bound at residue Asn-231. GTP-binding positions include 231-236 (NVGKSS), 250-256 (TSIPGTT), and 275-278 (DTAG). Ser-235 lines the Mg(2+) pocket. Positions 250, 252, and 255 each coordinate K(+). Thr-256 contributes to the Mg(2+) binding site. Lys-459 contributes to the (6S)-5-formyl-5,6,7,8-tetrahydrofolate binding site.

This sequence belongs to the TRAFAC class TrmE-Era-EngA-EngB-Septin-like GTPase superfamily. TrmE GTPase family. As to quaternary structure, homodimer. Heterotetramer of two MnmE and two MnmG subunits. The cofactor is K(+).

The protein resides in the cytoplasm. In terms of biological role, exhibits a very high intrinsic GTPase hydrolysis rate. Involved in the addition of a carboxymethylaminomethyl (cmnm) group at the wobble position (U34) of certain tRNAs, forming tRNA-cmnm(5)s(2)U34. The polypeptide is tRNA modification GTPase MnmE (Syntrophomonas wolfei subsp. wolfei (strain DSM 2245B / Goettingen)).